The sequence spans 176 residues: Ribonuclease mitogillin (176 aa).

Residues 1–27 (MVAIKNLFLLAATAVSVLAAPSPLDAR) form the signal peptide. 2 cysteine pairs are disulfide-bonded: C32–C174 and C102–C158. The active site involves H76. E122 acts as the Proton acceptor in catalysis. H163 (proton donor) is an active-site residue.

Belongs to the ribonuclease U2 family.

The protein resides in the secreted. This purine-specific ribonuclease cleaves 28S RNA in eukaryotic ribosomes, inhibits protein synthesis, and shows antitumor activity. The sequence is that of Ribonuclease mitogillin (mitF) from Aspergillus fumigatus (strain ATCC MYA-4609 / CBS 101355 / FGSC A1100 / Af293) (Neosartorya fumigata).